The sequence spans 336 residues: tRNA N6-adenosine threonylcarbamoyltransferase (336 aa).

2 residues coordinate Fe cation: H114 and H118. Residues 136–140, D169, G182, D186, and N275 each bind substrate; that span reads LVSGG. D301 contacts Fe cation.

Belongs to the KAE1 / TsaD family. The cofactor is Fe(2+).

The protein resides in the cytoplasm. It carries out the reaction L-threonylcarbamoyladenylate + adenosine(37) in tRNA = N(6)-L-threonylcarbamoyladenosine(37) in tRNA + AMP + H(+). Required for the formation of a threonylcarbamoyl group on adenosine at position 37 (t(6)A37) in tRNAs that read codons beginning with adenine. Is involved in the transfer of the threonylcarbamoyl moiety of threonylcarbamoyl-AMP (TC-AMP) to the N6 group of A37, together with TsaE and TsaB. TsaD likely plays a direct catalytic role in this reaction. The sequence is that of tRNA N6-adenosine threonylcarbamoyltransferase from Streptococcus pneumoniae (strain CGSP14).